Here is a 112-residue protein sequence, read N- to C-terminus: Cell cycle protein GpsB (112 aa).

Positions 32-75 form a coiled coil; sequence LDDIIKDYETYISTIEELRQENTRLKEEVKQAKKRQEAAQTTVS.

Belongs to the GpsB family. Forms polymers through the coiled coil domains. Interacts with PBP1, MreC and EzrA.

The protein resides in the cytoplasm. Its function is as follows. Divisome component that associates with the complex late in its assembly, after the Z-ring is formed, and is dependent on DivIC and PBP2B for its recruitment to the divisome. Together with EzrA, is a key component of the system that regulates PBP1 localization during cell cycle progression. Its main role could be the removal of PBP1 from the cell pole after pole maturation is completed. Also contributes to the recruitment of PBP1 to the division complex. Not essential for septum formation. The polypeptide is Cell cycle protein GpsB (Streptococcus mutans serotype c (strain ATCC 700610 / UA159)).